The following is a 267-amino-acid chain: MTLGRRLACLFLACVLPALLLGGTALASEIVGGRRARPHAWPFMVSLQLRGGHFCGATLIAPNFVMSAAHCVANVNVRAVRVVLGAHNLSRREPTRQVFAVQRIFENGYDPVNLLNDIVILQLNGSATINANVQVAQLPAQGRRLGNGVQCLAMGWGLLGRNRGIASVLQELNVTVVTSLCRRSNVCTLVRGRQAGVCFGDSGSPLVCNGLIHGIASFVRGGCASGLYPDAFAPVAQFVNWIDSIIQRSEDNPCPHPRDPDPASRTH.

An N-terminal signal peptide occupies residues 1–27 (MTLGRRLACLFLACVLPALLLGGTALA). A propeptide spanning residues 28-29 (SE) is cleaved from the precursor. A Peptidase S1 domain is found at 30–247 (IVGGRRARPH…FVNWIDSIIQ (218 aa)). Cysteines 55 and 71 form a disulfide. H70 (charge relay system) is an active-site residue. Residue N88 is glycosylated (N-linked (GlcNAc...) asparagine). D117 (charge relay system) is an active-site residue. 2 N-linked (GlcNAc...) asparagine glycosylation sites follow: N124 and N173. 3 disulfide bridges follow: C151–C208, C181–C187, and C198–C223. S202 (charge relay system) is an active-site residue.

The protein belongs to the peptidase S1 family. Elastase subfamily. Interacts with NOTCH2NL. Interacts with agaphelin, an antihemostatic protein from Anopheles gambiae. In terms of tissue distribution, bone marrow cells. Neutrophil.

The protein localises to the cytoplasmic vesicle. It is found in the phagosome. It catalyses the reaction Hydrolysis of proteins, including elastin. Preferential cleavage: Val-|-Xaa &gt; Ala-|-Xaa.. In terms of biological role, serine protease that modifies the functions of natural killer cells, monocytes and granulocytes. Inhibits C5a-dependent neutrophil enzyme release and chemotaxis. Promotes cleavage of GSDMB, thereby inhibiting pyroptosis. Promotes blood coagulation. Through the activation of the platelet fibrinogen receptor integrin alpha-IIb/beta-3, potentiates platelet aggregation induced by a threshold concentration of cathepsin G (CTSG). Cleaves and thus inactivates tissue factor pathway inhibitor (TFPI). Capable of killing E.coli but not S.aureus in vitro; digests outer membrane protein A (ompA) in E.coli and K.pneumoniae. This chain is Neutrophil elastase (ELANE), found in Homo sapiens (Human).